The primary structure comprises 63 residues: Large ribosomal subunit protein uL29 (63 aa).

Belongs to the universal ribosomal protein uL29 family.

The protein is Large ribosomal subunit protein uL29 of Pelagibacter ubique (strain HTCC1062).